The following is an 828-amino-acid chain: Periplasmic nitrate reductase (828 aa).

The segment at residues 1-31 is a signal peptide (tat-type signal); that stretch reads MKLSRRSFMKANAVAAAAAAAGLSVPGVARA. One can recognise a 4Fe-4S Mo/W bis-MGD-type domain in the interval 39 to 95; it reads IKWDKAPCRFCGTGCGVLVGTQQGRVVACQGDPDAPVNRGLNCIKGYFLPKIMYGKD. Positions 46, 49, 53, and 81 each coordinate [4Fe-4S] cluster. Residues Lys-83, Gln-150, Asn-175, Cys-179, 212–219, 243–247, 262–264, Met-372, Gln-376, Asn-482, 508–509, Lys-531, Asp-558, and 718–727 contribute to the Mo-bis(molybdopterin guanine dinucleotide) site; these read WGSNMAEM, STYQH, QSD, SD, and TGRVLEHWHT. Substrate is bound at residue Phe-794. Mo-bis(molybdopterin guanine dinucleotide) contacts are provided by Asn-802 and Lys-819.

Belongs to the prokaryotic molybdopterin-containing oxidoreductase family. NasA/NapA/NarB subfamily. As to quaternary structure, component of the periplasmic nitrate reductase NapAB complex composed of NapA and NapB. Requires [4Fe-4S] cluster as cofactor. The cofactor is Mo-bis(molybdopterin guanine dinucleotide). Predicted to be exported by the Tat system. The position of the signal peptide cleavage has not been experimentally proven.

It localises to the periplasm. The enzyme catalyses 2 Fe(II)-[cytochrome] + nitrate + 2 H(+) = 2 Fe(III)-[cytochrome] + nitrite + H2O. Its function is as follows. Catalytic subunit of the periplasmic nitrate reductase complex NapAB. Receives electrons from NapB and catalyzes the reduction of nitrate to nitrite. This chain is Periplasmic nitrate reductase, found in Escherichia coli O1:K1 / APEC.